A 704-amino-acid chain; its full sequence is Elongation factor G (704 aa).

One can recognise a tr-type G domain in the interval asparagine 6–leucine 282. GTP-binding positions include alanine 15–threonine 22, aspartate 79–histidine 83, and asparagine 133–aspartate 136.

This sequence belongs to the TRAFAC class translation factor GTPase superfamily. Classic translation factor GTPase family. EF-G/EF-2 subfamily.

The protein resides in the cytoplasm. Catalyzes the GTP-dependent ribosomal translocation step during translation elongation. During this step, the ribosome changes from the pre-translocational (PRE) to the post-translocational (POST) state as the newly formed A-site-bound peptidyl-tRNA and P-site-bound deacylated tRNA move to the P and E sites, respectively. Catalyzes the coordinated movement of the two tRNA molecules, the mRNA and conformational changes in the ribosome. The chain is Elongation factor G from Corynebacterium diphtheriae (strain ATCC 700971 / NCTC 13129 / Biotype gravis).